The chain runs to 418 residues: Protein fuzzy homolog (418 aa).

It belongs to the fuzzy family. In terms of assembly, component of the CPLANE (ciliogenesis and planar polarity effectors) complex, composed of INTU, FUZ and WDPCP. Interacts with CPLANE2. Interacts with CPLANE1.

The protein resides in the cytoplasm. The protein localises to the cytoskeleton. It localises to the cilium basal body. Functionally, probable planar cell polarity effector involved in cilium biogenesis. May regulate protein and membrane transport to the cilium. Proposed to function as core component of the CPLANE (ciliogenesis and planar polarity effectors) complex involved in the recruitment of peripheral IFT-A proteins to basal bodies. May regulate the morphogenesis of hair follicles which depends on functional primary cilia. Binds phosphatidylinositol 3-phosphate with highest affinity, followed by phosphatidylinositol 4-phosphate and phosphatidylinositol 5-phosphate. The protein is Protein fuzzy homolog (FUZ) of Homo sapiens (Human).